The chain runs to 122 residues: Small ribosomal subunit protein bS16 (122 aa).

Belongs to the bacterial ribosomal protein bS16 family.

This Prochlorococcus marinus (strain MIT 9313) protein is Small ribosomal subunit protein bS16.